A 122-amino-acid chain; its full sequence is MIQAETQLNAADNSGAKRLYCIKVLGGTRKRYASVGDIIVVSVKEAIPNAKVKKGDVLKAVVVRTQKEVRRPDGSYIKFDDNSAVLINQAKEPIGTRIFGPVARELRAKQFMKIISLAPEVL.

The protein belongs to the universal ribosomal protein uL14 family. Part of the 50S ribosomal subunit. Forms a cluster with proteins L3 and L19. In the 70S ribosome, L14 and L19 interact and together make contacts with the 16S rRNA in bridges B5 and B8.

Its function is as follows. Binds to 23S rRNA. Forms part of two intersubunit bridges in the 70S ribosome. In Syntrophobacter fumaroxidans (strain DSM 10017 / MPOB), this protein is Large ribosomal subunit protein uL14.